Reading from the N-terminus, the 354-residue chain is DNA repair protein rhp57 (354 aa).

Residue 100-107 coordinates ATP; that stretch reads GESGSGKS.

This sequence belongs to the RecA family.

Its subcellular location is the nucleus. In terms of biological role, involved in recombination DNA repair and in the repair of gamma-ray-induced damage. This chain is DNA repair protein rhp57 (rhp57), found in Schizosaccharomyces pombe (strain 972 / ATCC 24843) (Fission yeast).